We begin with the raw amino-acid sequence, 55 residues long: Large ribosomal subunit protein bL33 (55 aa).

The protein belongs to the bacterial ribosomal protein bL33 family.

This chain is Large ribosomal subunit protein bL33 (rpmG), found in Buchnera aphidicola subsp. Acyrthosiphon pisum (strain APS) (Acyrthosiphon pisum symbiotic bacterium).